The sequence spans 339 residues: Heat-inducible transcription repressor HrcA (339 aa).

The protein belongs to the HrcA family.

In terms of biological role, negative regulator of class I heat shock genes (grpE-dnaK-dnaJ and groELS operons). Prevents heat-shock induction of these operons. This chain is Heat-inducible transcription repressor HrcA, found in Clostridium perfringens (strain SM101 / Type A).